The sequence spans 207 residues: ATP-dependent Clp protease proteolytic subunit (207 aa).

Serine 111 acts as the Nucleophile in catalysis. Histidine 136 is a catalytic residue.

The protein belongs to the peptidase S14 family. As to quaternary structure, fourteen ClpP subunits assemble into 2 heptameric rings which stack back to back to give a disk-like structure with a central cavity, resembling the structure of eukaryotic proteasomes.

The protein localises to the cytoplasm. It carries out the reaction Hydrolysis of proteins to small peptides in the presence of ATP and magnesium. alpha-casein is the usual test substrate. In the absence of ATP, only oligopeptides shorter than five residues are hydrolyzed (such as succinyl-Leu-Tyr-|-NHMec, and Leu-Tyr-Leu-|-Tyr-Trp, in which cleavage of the -Tyr-|-Leu- and -Tyr-|-Trp bonds also occurs).. In terms of biological role, cleaves peptides in various proteins in a process that requires ATP hydrolysis. Has a chymotrypsin-like activity. Plays a major role in the degradation of misfolded proteins. This Aliivibrio fischeri (strain ATCC 700601 / ES114) (Vibrio fischeri) protein is ATP-dependent Clp protease proteolytic subunit.